A 285-amino-acid chain; its full sequence is Chitinase 4 (285 aa).

Positions 1–27 (MAAKMATMVALVFGLALLLSAAAPAAA) are cleaved as a signal peptide. Residues 28–62 (QNCGCQDGYCCSQWGYCGTTEAYCGQGCQSGPCWG) form the Chitin-binding type-1 domain. Cystine bridges form between C30–C38, C32–C44, C37–C51, C55–C60, C104–C153, C166–C175, and C253–C285. The Proton donor role is filled by E148.

Belongs to the glycosyl hydrolase 19 family. Chitinase class IV subfamily. In terms of tissue distribution, expressed at low levels in leaves, sheaths and meristems.

The enzyme catalyses Random endo-hydrolysis of N-acetyl-beta-D-glucosaminide (1-&gt;4)-beta-linkages in chitin and chitodextrins.. Its function is as follows. Hydrolyzes chitin and may function in reproductive organs during embryogenesis and seed maturation. The chain is Chitinase 4 (Cht4) from Oryza sativa subsp. japonica (Rice).